Consider the following 222-residue polypeptide: Flagellin B5 (222 aa).

A propeptide spanning residues 1–4 (MRRG) is cleaved from the precursor.

This sequence belongs to the archaeal flagellin family.

The protein localises to the archaeal flagellum. Flagellin is the subunit protein which polymerizes to form the filaments of archaeal flagella. In Pyrococcus abyssi (strain GE5 / Orsay), this protein is Flagellin B5 (flaB5).